A 336-amino-acid polypeptide reads, in one-letter code: Homeobox-leucine zipper protein HAT14 (336 aa).

Disordered regions lie at residues arginine 53 to valine 141 and serine 160 to leucine 194. The span at glutamate 64 to arginine 81 shows a compositional bias: basic and acidic residues. Residues valine 120–alanine 129 are compositionally biased toward acidic residues. A compositionally biased stretch (low complexity) spans valine 130–valine 141. Over residues serine 160–alanine 173 the composition is skewed to basic and acidic residues. A DNA-binding region (homeobox) is located at residues serine 187–glutamine 246. The segment at leucine 254–leucine 275 is leucine-zipper.

This sequence belongs to the HD-ZIP homeobox family. Class II subfamily.

Its subcellular location is the nucleus. Probable transcription factor. The sequence is that of Homeobox-leucine zipper protein HAT14 (HAT14) from Arabidopsis thaliana (Mouse-ear cress).